The sequence spans 161 residues: Urease accessory protein UreE (161 aa).

The protein belongs to the UreE family. As to quaternary structure, homodimer.

The protein resides in the cytoplasm. Functionally, involved in urease metallocenter assembly. Binds nickel. Probably functions as a nickel donor during metallocenter assembly. It is not essential for urease activity. This is Urease accessory protein UreE from Proteus mirabilis (strain HI4320).